A 147-amino-acid chain; its full sequence is Large ribosomal subunit protein uL13 (147 aa).

It belongs to the universal ribosomal protein uL13 family. As to quaternary structure, part of the 50S ribosomal subunit.

In terms of biological role, this protein is one of the early assembly proteins of the 50S ribosomal subunit, although it is not seen to bind rRNA by itself. It is important during the early stages of 50S assembly. In Levilactobacillus brevis (strain ATCC 367 / BCRC 12310 / CIP 105137 / JCM 1170 / LMG 11437 / NCIMB 947 / NCTC 947) (Lactobacillus brevis), this protein is Large ribosomal subunit protein uL13.